We begin with the raw amino-acid sequence, 423 residues long: Flavohemoprotein B (423 aa).

The Globin domain maps to 1 to 136 (MLSQKSIQII…VAQAFMDAEE (136 aa)). H83 contacts heme b. Active-site charge relay system residues include Y93 and E135. The tract at residues 149 to 423 (WKDTREFVVD…LRGVKNIIEN (275 aa)) is reductase. Residues 150–268 (KDTREFVVDR…SVPAGDFVVN (119 aa)) enclose the FAD-binding FR-type domain. FAD is bound by residues Y188 and 212 to 215 (RHYS). 281 to 286 (GVGINP) contacts NADP(+). 400–403 (LFGP) is a binding site for FAD.

This sequence belongs to the globin family. Two-domain flavohemoproteins subfamily. It in the C-terminal section; belongs to the flavoprotein pyridine nucleotide cytochrome reductase family. FAD serves as cofactor. The cofactor is heme b.

Its subcellular location is the cytoplasm. It catalyses the reaction 2 nitric oxide + NADPH + 2 O2 = 2 nitrate + NADP(+) + H(+). The enzyme catalyses 2 nitric oxide + NADH + 2 O2 = 2 nitrate + NAD(+) + H(+). Its function is as follows. Is involved in NO detoxification in an aerobic process, termed nitric oxide dioxygenase (NOD) reaction that utilizes O(2) and NAD(P)H to convert NO to nitrate, which protects the cell from various noxious nitrogen compounds. Therefore, plays a central role in the inducible response to nitrosative stress. Functionally, in the presence of oxygen and NADH, it has NADH oxidase activity, which leads to the generation of superoxide and H(2)O(2). Under anaerobic conditions, it also exhibits nitric oxide reductase and FAD reductase activities. However, all these reactions are much lower than NOD activity. This chain is Flavohemoprotein B (fhbB), found in Dictyostelium discoideum (Social amoeba).